A 215-amino-acid chain; its full sequence is Cytochrome b6 (215 aa).

The helical transmembrane segment at 32 to 52 (IFYCIGGITFTCFLVQVATGF) threads the bilayer. Residue cysteine 35 coordinates heme c. Heme b is bound by residues histidine 86 and histidine 100. 3 consecutive transmembrane segments (helical) span residues 90–110 (ASMM…TGGF), 116–136 (LTWV…VTGY), and 186–206 (LHTF…FLMI). Heme b-binding residues include histidine 187 and histidine 202.

This sequence belongs to the cytochrome b family. PetB subfamily. As to quaternary structure, the 4 large subunits of the cytochrome b6-f complex are cytochrome b6, subunit IV (17 kDa polypeptide, PetD), cytochrome f and the Rieske protein, while the 4 small subunits are PetG, PetL, PetM and PetN. The complex functions as a dimer. It depends on heme b as a cofactor. Heme c is required as a cofactor.

Its subcellular location is the plastid. The protein localises to the chloroplast thylakoid membrane. Its function is as follows. Component of the cytochrome b6-f complex, which mediates electron transfer between photosystem II (PSII) and photosystem I (PSI), cyclic electron flow around PSI, and state transitions. The chain is Cytochrome b6 from Chlorella vulgaris (Green alga).